We begin with the raw amino-acid sequence, 333 residues long: Adenosine deaminase (333 aa).

Zn(2+)-binding residues include histidine 12 and histidine 14. Substrate is bound by residues histidine 14, aspartate 16, and glycine 170. Residue histidine 197 coordinates Zn(2+). Glutamate 200 functions as the Proton donor in the catalytic mechanism. Aspartate 278 provides a ligand contact to Zn(2+). Substrate is bound at residue aspartate 279.

The protein belongs to the metallo-dependent hydrolases superfamily. Adenosine and AMP deaminases family. Adenosine deaminase subfamily. Zn(2+) is required as a cofactor.

The enzyme catalyses adenosine + H2O + H(+) = inosine + NH4(+). It carries out the reaction 2'-deoxyadenosine + H2O + H(+) = 2'-deoxyinosine + NH4(+). Catalyzes the hydrolytic deamination of adenosine and 2-deoxyadenosine. The polypeptide is Adenosine deaminase (Escherichia coli O45:K1 (strain S88 / ExPEC)).